The following is a 116-amino-acid chain: Venom nerve growth factor (116 aa).

Disulfide bonds link Cys-14/Cys-78, Cys-56/Cys-106, and Cys-66/Cys-108.

This sequence belongs to the NGF-beta family. Homodimer; non-covalently linked. Not glycosylated. Expressed by the venom gland.

It is found in the secreted. Nerve growth factor is important for the development and maintenance of the sympathetic and sensory nervous systems. It stimulates division and differentiation of sympathetic and embryonic sensory neurons as well as basal forebrain cholinergic neurons in the brain. Its relevance in the snake venom is not clear. However, it has been shown to inhibit metalloproteinase-dependent proteolysis of platelet glycoprotein Ib alpha, suggesting a metalloproteinase inhibition to prevent metalloprotease autodigestion and/or protection against prey proteases. Binds a lipid between the two protein chains in the homodimer. The lipid-bound form promotes histamine relase from mouse mast cells, contrary to the lipid-free form. This Naja naja (Indian cobra) protein is Venom nerve growth factor.